The chain runs to 418 residues: Cell division protein FtsZ (418 aa).

Residues 27–31, 114–116, Glu-145, Lys-149, and Asp-193 each bind GTP; these read GGGSN and GTG. A disordered region spans residues 386-418; that stretch reads KNGVKGHTFGVPLPSVNEDLDEPTFLRNRNKGL.

This sequence belongs to the FtsZ family. As to quaternary structure, homodimer. Polymerizes to form a dynamic ring structure in a strictly GTP-dependent manner. Interacts directly with several other division proteins.

The protein resides in the cytoplasm. In terms of biological role, essential cell division protein that forms a contractile ring structure (Z ring) at the future cell division site. The regulation of the ring assembly controls the timing and the location of cell division. One of the functions of the FtsZ ring is to recruit other cell division proteins to the septum to produce a new cell wall between the dividing cells. Binds GTP and shows GTPase activity. This Treponema pallidum (strain Nichols) protein is Cell division protein FtsZ.